Consider the following 431-residue polypeptide: UDP-N-acetylglucosamine 1-carboxyvinyltransferase (431 aa).

A phosphoenolpyruvate-binding site is contributed by 22–23; that stretch reads KN. R93 provides a ligand contact to UDP-N-acetyl-alpha-D-glucosamine. The active-site Proton donor is C117. 2-(S-cysteinyl)pyruvic acid O-phosphothioketal is present on C117. Residues D307 and V329 each contribute to the UDP-N-acetyl-alpha-D-glucosamine site.

The protein belongs to the EPSP synthase family. MurA subfamily.

The protein resides in the cytoplasm. The catalysed reaction is phosphoenolpyruvate + UDP-N-acetyl-alpha-D-glucosamine = UDP-N-acetyl-3-O-(1-carboxyvinyl)-alpha-D-glucosamine + phosphate. It participates in cell wall biogenesis; peptidoglycan biosynthesis. In terms of biological role, cell wall formation. Adds enolpyruvyl to UDP-N-acetylglucosamine. This is UDP-N-acetylglucosamine 1-carboxyvinyltransferase from Nitrosococcus oceani (strain ATCC 19707 / BCRC 17464 / JCM 30415 / NCIMB 11848 / C-107).